The chain runs to 238 residues: uncharacterized protein (238 aa).

The next 4 membrane-spanning stretches (helical) occupy residues 13–33, 40–60, 107–127, and 140–160; these read TLFFIYFVFLTSFCLCFFGII, GSVGQLIAKLVVIVVLTLILG, VVLILSLVLTYYLSIYAFCQV, and VISLIILIFFLSLSFFVPMAF. 2 4Fe-4S ferredoxin-type domains span residues 178–208 and 204–233; these read PFFQLKTNNNCVKCKLCEFKCPMQIKITEKL and ITEKLDQKECIRCFECKSSCKKDALSFSYA. [4Fe-4S] cluster contacts are provided by C188, C191, C194, C198, C213, C216, C219, and C223.

It localises to the cell membrane. This is an uncharacterized protein from Methanocaldococcus jannaschii (strain ATCC 43067 / DSM 2661 / JAL-1 / JCM 10045 / NBRC 100440) (Methanococcus jannaschii).